Consider the following 384-residue polypeptide: Chaperone protein DnaJ (384 aa).

The 66-residue stretch at Asp-5–Gly-70 folds into the J domain. The segment at Gly-138 to Glu-216 adopts a CR-type zinc-finger fold. Zn(2+) is bound by residues Cys-151, Cys-154, Cys-168, Cys-171, Cys-190, Cys-193, Cys-204, and Cys-207. CXXCXGXG motif repeat units lie at residues Cys-151–Gly-158, Cys-168–Gly-175, Cys-190–Gly-197, and Cys-204–Gly-211. The tract at residues Lys-300 to Arg-322 is disordered.

The protein belongs to the DnaJ family. Homodimer. Zn(2+) serves as cofactor.

It localises to the cytoplasm. Functionally, participates actively in the response to hyperosmotic and heat shock by preventing the aggregation of stress-denatured proteins and by disaggregating proteins, also in an autonomous, DnaK-independent fashion. Unfolded proteins bind initially to DnaJ; upon interaction with the DnaJ-bound protein, DnaK hydrolyzes its bound ATP, resulting in the formation of a stable complex. GrpE releases ADP from DnaK; ATP binding to DnaK triggers the release of the substrate protein, thus completing the reaction cycle. Several rounds of ATP-dependent interactions between DnaJ, DnaK and GrpE are required for fully efficient folding. Also involved, together with DnaK and GrpE, in the DNA replication of plasmids through activation of initiation proteins. The polypeptide is Chaperone protein DnaJ (Paracoccus denitrificans (strain Pd 1222)).